Reading from the N-terminus, the 84-residue chain is Small ribosomal subunit protein bS18 (84 aa).

The protein belongs to the bacterial ribosomal protein bS18 family. As to quaternary structure, part of the 30S ribosomal subunit. Forms a tight heterodimer with protein bS6.

Functionally, binds as a heterodimer with protein bS6 to the central domain of the 16S rRNA, where it helps stabilize the platform of the 30S subunit. The chain is Small ribosomal subunit protein bS18 from Mycobacterium leprae (strain Br4923).